The primary structure comprises 209 residues: Large ribosomal subunit protein uL3 (209 aa).

A disordered region spans residues 133-152 (THGNSLSHRVPGSIGQNQTP). Gln-150 is subject to N5-methylglutamine.

This sequence belongs to the universal ribosomal protein uL3 family. As to quaternary structure, part of the 50S ribosomal subunit. Forms a cluster with proteins L14 and L19. In terms of processing, methylated by PrmB.

One of the primary rRNA binding proteins, it binds directly near the 3'-end of the 23S rRNA, where it nucleates assembly of the 50S subunit. The chain is Large ribosomal subunit protein uL3 from Yersinia pseudotuberculosis serotype O:1b (strain IP 31758).